Here is a 90-residue protein sequence, read N- to C-terminus: ESAT-6-like protein EsxE (90 aa).

The protein belongs to the WXG100 family. ESAT-6 subfamily.

It localises to the secreted. This chain is ESAT-6-like protein EsxE, found in Mycobacterium tuberculosis (strain CDC 1551 / Oshkosh).